The following is a 273-amino-acid chain: Type IV secretion system protein PtlF (273 aa).

The first 20 residues, 1 to 20 (MMAARMMAAGLAATALSAHA), serve as a signal peptide directing secretion.

Belongs to the TrbG/VirB9 family. As to quaternary structure, forms a complex with PtlI.

The protein localises to the cell outer membrane. Component of the type IV secretion system ptl required for secretion of assembled pertussis toxin (PTX) through the outer membrane. In Bordetella pertussis (strain Tohama I / ATCC BAA-589 / NCTC 13251), this protein is Type IV secretion system protein PtlF (ptlF).